The chain runs to 692 residues: Non-hemolytic phospholipase C (692 aa).

The tat-type signal signal peptide spans 1–35; sequence MISKSRRSFIRLAAGTVGATVATSMLPSSIQAALA.

It belongs to the bacterial phospholipase C family. Predicted to be exported by the Tat system. The position of the signal peptide cleavage has not been experimentally proven.

It carries out the reaction a 1,2-diacyl-sn-glycero-3-phosphocholine + H2O = phosphocholine + a 1,2-diacyl-sn-glycerol + H(+). Functionally, hydrolyzes phosphatidylserine as well as phosphatidylcholine. The protein is Non-hemolytic phospholipase C (plcN) of Pseudomonas aeruginosa (strain ATCC 15692 / DSM 22644 / CIP 104116 / JCM 14847 / LMG 12228 / 1C / PRS 101 / PAO1).